Reading from the N-terminus, the 190-residue chain is MKKIILASSSPRRREILSRFFDIIVHPSNVNEDKIKEKDPTETAIKIAKAKAFDLAVKFPTDTIIAADTIVTLNGKILGKPKDSEEARKMLKQLSGKTHEVVTGYCIISGDKIIEGAEITKVKFRELSDDLIEWYISTQEWRDKAGGYGIQGFGAILVEHIEGDYYNVVGLPIIVIIKLIELGHKLKRIF.

The active-site Proton acceptor is the D68.

It belongs to the Maf family. YhdE subfamily. It depends on a divalent metal cation as a cofactor.

Its subcellular location is the cytoplasm. The catalysed reaction is dTTP + H2O = dTMP + diphosphate + H(+). The enzyme catalyses UTP + H2O = UMP + diphosphate + H(+). Its function is as follows. Nucleoside triphosphate pyrophosphatase that hydrolyzes dTTP and UTP. May have a dual role in cell division arrest and in preventing the incorporation of modified nucleotides into cellular nucleic acids. This Pyrococcus furiosus (strain ATCC 43587 / DSM 3638 / JCM 8422 / Vc1) protein is dTTP/UTP pyrophosphatase.